A 774-amino-acid polypeptide reads, in one-letter code: Phosphoribosylformylglycinamidine synthase subunit PurL (774 aa).

The active site involves H51. ATP is bound by residues Y54 and K93. E95 contacts Mg(2+). Residues 96–99 (SHNH) and R118 each bind substrate. The active-site Proton acceptor is H97. Position 119 (D119) interacts with Mg(2+). A substrate-binding site is contributed by Q242. D270 lines the Mg(2+) pocket. A substrate-binding site is contributed by 314–316 (ESQ). Residues D514 and G551 each coordinate ATP. Mg(2+) is bound at residue N552. Substrate is bound at residue S554.

Belongs to the FGAMS family. As to quaternary structure, monomer. Part of the FGAM synthase complex composed of 1 PurL, 1 PurQ and 2 PurS subunits.

It is found in the cytoplasm. It carries out the reaction N(2)-formyl-N(1)-(5-phospho-beta-D-ribosyl)glycinamide + L-glutamine + ATP + H2O = 2-formamido-N(1)-(5-O-phospho-beta-D-ribosyl)acetamidine + L-glutamate + ADP + phosphate + H(+). The protein operates within purine metabolism; IMP biosynthesis via de novo pathway; 5-amino-1-(5-phospho-D-ribosyl)imidazole from N(2)-formyl-N(1)-(5-phospho-D-ribosyl)glycinamide: step 1/2. Functionally, part of the phosphoribosylformylglycinamidine synthase complex involved in the purines biosynthetic pathway. Catalyzes the ATP-dependent conversion of formylglycinamide ribonucleotide (FGAR) and glutamine to yield formylglycinamidine ribonucleotide (FGAM) and glutamate. The FGAM synthase complex is composed of three subunits. PurQ produces an ammonia molecule by converting glutamine to glutamate. PurL transfers the ammonia molecule to FGAR to form FGAM in an ATP-dependent manner. PurS interacts with PurQ and PurL and is thought to assist in the transfer of the ammonia molecule from PurQ to PurL. The sequence is that of Phosphoribosylformylglycinamidine synthase subunit PurL from Gloeobacter violaceus (strain ATCC 29082 / PCC 7421).